A 227-amino-acid chain; its full sequence is Phosphoribosylaminoimidazole-succinocarboxamide synthase (227 aa).

The protein belongs to the SAICAR synthetase family.

The catalysed reaction is 5-amino-1-(5-phospho-D-ribosyl)imidazole-4-carboxylate + L-aspartate + ATP = (2S)-2-[5-amino-1-(5-phospho-beta-D-ribosyl)imidazole-4-carboxamido]succinate + ADP + phosphate + 2 H(+). Its pathway is purine metabolism; IMP biosynthesis via de novo pathway; 5-amino-1-(5-phospho-D-ribosyl)imidazole-4-carboxamide from 5-amino-1-(5-phospho-D-ribosyl)imidazole-4-carboxylate: step 1/2. This chain is Phosphoribosylaminoimidazole-succinocarboxamide synthase, found in Clostridium tetani (strain Massachusetts / E88).